A 121-amino-acid polypeptide reads, in one-letter code: NADH-ubiquinone oxidoreductase chain 3 (121 aa).

A run of 3 helical transmembrane segments spans residues 11 to 31 (ILTFFAISFSISTLILALSYF), 63 to 83 (FYLVAILFLIFDLEISFLFPW), and 90 to 110 (LSIFGFWSMIVFLIILTLGFI).

This sequence belongs to the complex I subunit 3 family.

It localises to the mitochondrion membrane. The catalysed reaction is a ubiquinone + NADH + 5 H(+)(in) = a ubiquinol + NAD(+) + 4 H(+)(out). Functionally, core subunit of the mitochondrial membrane respiratory chain NADH dehydrogenase (Complex I) that is believed to belong to the minimal assembly required for catalysis. Complex I functions in the transfer of electrons from NADH to the respiratory chain. The immediate electron acceptor for the enzyme is believed to be ubiquinone. The chain is NADH-ubiquinone oxidoreductase chain 3 (NAD3) from Porphyra purpurea (Red seaweed).